We begin with the raw amino-acid sequence, 331 residues long: 6-phosphogluconolactonase (331 aa).

K287 carries the post-translational modification N6-acetyllysine.

This sequence belongs to the cycloisomerase 2 family.

The enzyme catalyses 6-phospho-D-glucono-1,5-lactone + H2O = 6-phospho-D-gluconate + H(+). The protein operates within carbohydrate degradation; pentose phosphate pathway; D-ribulose 5-phosphate from D-glucose 6-phosphate (oxidative stage): step 2/3. Catalyzes the hydrolysis of 6-phosphogluconolactone to 6-phosphogluconate. This is 6-phosphogluconolactonase from Escherichia coli O139:H28 (strain E24377A / ETEC).